A 139-amino-acid chain; its full sequence is uncharacterized protein (139 aa).

A disordered region spans residues 1-116; the sequence is MYNPWQVGAS…TRPRVVARGK (116 aa). Composition is skewed to low complexity over residues 50-70 and 84-110; these read RPRP…GPRP and LPAY…TRPR.

This is an uncharacterized protein from Homo sapiens (Human).